The primary structure comprises 415 residues: Ribulose bisphosphate carboxylase/oxygenase activase (415 aa).

ATP is bound at residue 37–44 (GRKGEGKT).

It belongs to the RuBisCO activase family.

Functionally, activation of RuBisCO (ribulose-1,5-bisohosphate carboxylase/oxygenase; EC 4.1.1.39) involves the ATP-dependent carboxylation of the epsilon-amino group of lysine leading to a carbamate structure. The chain is Ribulose bisphosphate carboxylase/oxygenase activase (rca) from Anabaena sp. (strain CA / ATCC 33047).